Reading from the N-terminus, the 425-residue chain is MIDIKRLRQDFDAIQEKLAHRGEDLTDMNRFIALDEKRRELIAKTEVLKAERNEATKKIAELKRNKENADEAIAAMRQVGDEVKALDEELREVEATLNLLLLGIPNIPHDSVPIGSTEDDNVVIREVGDKPAFDFEAVPHWDLMEQLKIVDVERAGKVTGSRFVFYRGAGARLERALINFMMDLHQDKNGYTEILPPLMVNRDSMTGTGQLPKFEEDAFKVEDTNYFLVPTAEVPVTNMHRDEILSADQLPIGYAAYSQCFRSEAGSAGRDTRGLIRQHQFNKVELVRFVKPEESYEQLELLTGQAEEVLKLLKLPYQVLSMCTADLGFTAAKKYDIEVWMPSQGVYREISSCSNFEDFQARRAQIRFRREANAKPEFVHTLNGSALAVGRTVAAILENYQQADGSVVIPEVLRPYMGGLEVIQG.

An L-serine-binding site is contributed by 231–233 (TAE). ATP is bound at residue 262-264 (RSE). Position 285 (E285) interacts with L-serine. 349-352 (EISS) contacts ATP. L-serine is bound at residue S385.

The protein belongs to the class-II aminoacyl-tRNA synthetase family. Type-1 seryl-tRNA synthetase subfamily. As to quaternary structure, homodimer. The tRNA molecule binds across the dimer.

The protein resides in the cytoplasm. It catalyses the reaction tRNA(Ser) + L-serine + ATP = L-seryl-tRNA(Ser) + AMP + diphosphate + H(+). The enzyme catalyses tRNA(Sec) + L-serine + ATP = L-seryl-tRNA(Sec) + AMP + diphosphate + H(+). Its pathway is aminoacyl-tRNA biosynthesis; selenocysteinyl-tRNA(Sec) biosynthesis; L-seryl-tRNA(Sec) from L-serine and tRNA(Sec): step 1/1. Functionally, catalyzes the attachment of serine to tRNA(Ser). Is also able to aminoacylate tRNA(Sec) with serine, to form the misacylated tRNA L-seryl-tRNA(Sec), which will be further converted into selenocysteinyl-tRNA(Sec). This is Serine--tRNA ligase from Exiguobacterium sibiricum (strain DSM 17290 / CCUG 55495 / CIP 109462 / JCM 13490 / 255-15).